A 449-amino-acid chain; its full sequence is GTPase Der (449 aa).

EngA-type G domains follow at residues 4 to 174 (PIVA…PPKT) and 183 to 358 (LRIA…VQRQ). GTP contacts are provided by residues 10–17 (GRPNVGKS), 57–61 (DTAGV), 126–129 (NKCD), 189–196 (GRPNVGKS), 236–240 (DTAGI), and 301–304 (NKWD). Residues 359 to 444 (KRVPTSELNN…PIVIVFRSRE (86 aa)) form the KH-like domain.

The protein belongs to the TRAFAC class TrmE-Era-EngA-EngB-Septin-like GTPase superfamily. EngA (Der) GTPase family. As to quaternary structure, associates with the 50S ribosomal subunit.

GTPase that plays an essential role in the late steps of ribosome biogenesis. This Chloroflexus aurantiacus (strain ATCC 29366 / DSM 635 / J-10-fl) protein is GTPase Der.